A 125-amino-acid chain; its full sequence is Large ribosomal subunit protein bL12 (125 aa).

This sequence belongs to the bacterial ribosomal protein bL12 family. As to quaternary structure, homodimer. Part of the ribosomal stalk of the 50S ribosomal subunit. Forms a multimeric L10(L12)X complex, where L10 forms an elongated spine to which 2 to 4 L12 dimers bind in a sequential fashion. Binds GTP-bound translation factors.

Its function is as follows. Forms part of the ribosomal stalk which helps the ribosome interact with GTP-bound translation factors. Is thus essential for accurate translation. The protein is Large ribosomal subunit protein bL12 of Rickettsia felis (strain ATCC VR-1525 / URRWXCal2) (Rickettsia azadi).